Consider the following 1044-residue polypeptide: MAAPGRLLLRPRPGGLLLLLPGLLLPLADAFNLDVESPAEYAGPEGSYFGFAVDFFEPSTSSRMFLLVGAPKANTTQPGIVEGGQVLKCECSSSRRCQPIEFDSTGNRDYAKDDPLEFKSHQWFGASVRSKQDKILACAPLYHWRTEMKQEREPVGTCFLQDGTKTVEYAPCRSKNIDADGQGFCQGGFSIDFTKADRVLLGGPGSFYWQGQLISDQVAEIISKYDPNVYSIKYNNQLATRTAQAIFDDSYLGYSVAVGDFNGDGIEDFVSGVPRAARTLGMVYIYDGKNMSSLHNFTGEQMAAYFGFSVAATDINGDDYADVFIGAPLFMDRGSDGKLQEVGQVSVSLQRAVGDFQTTKLNGFEVFARFGSAIAPLGDLDQDGFNDIAIAAPYGGEDKKGLVYIFNGRSTGLNSVPSQILEGQWAAQSMPPSFGYSMKGATDVDRNGYPDLVVGAFGVDRAVLYRARPVVTVNAGLEVYPSILNQDNKICPLPGTALKVSCFNVRFCLKADGKGTLPRKLHFQVELLLDKLKQKGAIRRALFLHNRSPVHSKTMTVFRGGQMQCEELVAYLRDESEFRDKLTPITIFMEYRLDQRTAADATGLQPILNQFTPANVSRQAHILLDCGEDNVCKPKLEVSVNSDQKKIYIGDDNPLTLTVKAQNQGEGAYEAELIVSIPPQADFIGVVRNNEALARLSCAFKTENQTRQVVCDLGNPMKAGTQLLAGLRFSVHQQSEMDTSVKFDLKIQSSNSFDNVSPVVSYKVDLAVLAAVEIRGVSSPDHIFLPIPNWEYKENPETEEDVGPIVQHIYELRNNGPSSFSKAILNLQWPYKYNNNTLLYILHYDIDGPMNCTADTEINPLRIKTPEKNDTAAAGQGERNHLITKRDLTLREGDVHTLGCGIAKCLQITCQVGRLDRGKSAILYVKSLLWTETFMNKENQNHSYSLKSSASFNIIEFPYKNLPIEDLFNSTLVTTNITWGIQPAPMPVPVWVIILAVLAGLLLLAVLVFVMYRMGFFKRVRPPQEEQEREQLQPHENGEGNSET.

The N-terminal stretch at 1–30 (MAAPGRLLLRPRPGGLLLLLPGLLLPLADA) is a signal peptide. Residues 31-988 (FNLDVESPAE…WGIQPAPMPV (958 aa)) lie on the Extracellular side of the membrane. 7 FG-GAP repeats span residues 32–98 (NLDV…RRCQ), 109–170 (DYAK…VEYA), 173–225 (RSKN…ISKY), 237–291 (QLAT…GKNM), 292–357 (SSLH…GDFQ), 358–415 (TTKL…GLNS), and 419–482 (QILE…VYPS). N74 is a glycosylation site (N-linked (GlcNAc...) asparagine). 3 disulfide bridges follow: C89/C97, C138/C158, and C172/C185. Residues D260, N262, D264, I266, and D268 each coordinate Ca(2+). N290 and N296 each carry an N-linked (GlcNAc...) asparagine glycan. The Ca(2+) site is built by D314, N316, D318, Y320, D322, D379, D381, D383, F385, D387, D443, D445, N447, Y449, and D451. Disulfide bonds link C491–C502 and C508–C565. N615 carries N-linked (GlcNAc...) asparagine glycosylation. 2 disulfides stabilise this stretch: C626–C632 and C698–C711. N-linked (GlcNAc...) asparagine glycosylation is found at N704, N835, N851, and N869. Disulfide bonds link C852–C910 and C900–C905. N-linked (GlcNAc...) asparagine glycosylation is found at N941, N969, and N976. The helical transmembrane segment at 989-1012 (PVWVIILAVLAGLLLLAVLVFVMY) threads the bilayer. Over 1013 to 1044 (RMGFFKRVRPPQEEQEREQLQPHENGEGNSET) the chain is Cytoplasmic. The GFFKR motif motif lies at 1015–1019 (GFFKR). Basic and acidic residues predominate over residues 1023-1038 (PQEEQEREQLQPHENG). A disordered region spans residues 1023 to 1044 (PQEEQEREQLQPHENGEGNSET).

This sequence belongs to the integrin alpha chain family. In terms of assembly, heterodimer of an alpha and a beta subunit. The alpha subunit is composed of a heavy and a light chain linked by a disulfide bond. Alpha-V (ITGAV) associates with either beta-1 (ITGB1), beta-3 (ITGB3), beta-5 (ITGB5), beta-6 (ITGB6) or beta-8 (ITGB8). Interacts with RAB25. Interacts with CIB1. Integrins ITGAV:ITGB3 and ITGAV:ITGB5 interact with FBLN5 (via N-terminus). ITGAV:ITGB3 and ITGAV:ITGB5 interact with CCN3. ITGAV:ITGB3 interacts with ADGRA2. ITGAV:ITGB3 interacts with FGF2; it is likely that FGF2 can simultaneously bind ITGAV:ITGB3 and FGF receptors. ITGAV:ITGB3 interacts with SELP (via C-type lectin domain); the interaction mediates cell-cell interaction and adhesion. ITGAV:ITGB3 is found in a ternary complex with CX3CR1 and CX3CL1. ITGAV:ITGB3 is found in a ternary complex with NRG1 and ERBB3. ITGAV:ITGB3 is found in a ternary complex with FGF1 and FGFR1. ITGAV:ITGB3 is found in a ternary complex with IGF1 and IGF1R. ITGAV:ITGB3 interacts with IGF2. ITGAV:ITGB3 and ITGAV:ITGB6 interact with FBN1. ITGAV:ITGB3 interacts with CD9, CD81 and CD151 (via second extracellular domain). ITGAV:ITGB6 interacts with TGFB1. ITGAV:ITGB3 interacts with PTN. Forms a complex with PTPRZ1 and PTN that stimulates endothelial cell migration through ITGB3 'Tyr-773' phosphorylation. Interacts with TM4SF19.

It localises to the cell membrane. The protein localises to the cell junction. Its subcellular location is the focal adhesion. Its function is as follows. The alpha-V (ITGAV) integrins are receptors for vitronectin, cytotactin, fibronectin, fibrinogen, laminin, matrix metalloproteinase-2, osteopontin, osteomodulin, prothrombin, thrombospondin, TGFB1 and vWF. They recognize the sequence R-G-D in a wide array of ligands. Alpha-V integrins may play a role in embryo implantation, angiogenesis and wound healing. ITGAV:ITGB3 binds to fractalkine (CX3CL1) and may act as its coreceptor in CX3CR1-dependent fractalkine signaling. ITGAV:ITGB3 binds to NRG1 (via EGF domain) and this binding is essential for NRG1-ERBB signaling. ITGAV:ITGB3 binds to FGF1 and this binding is essential for FGF1 signaling. ITGAV:ITGB3 binds to FGF2 and this binding is essential for FGF2 signaling. ITGAV:ITGB3 binds to IGF1 and this binding is essential for IGF1 signaling. ITGAV:ITGB3 binds to IGF2 and this binding is essential for IGF2 signaling. ITGAV:ITGB3 binds to IL1B and this binding is essential for IL1B signaling. ITGAV:ITGB3 binds to PLA2G2A via a site (site 2) which is distinct from the classical ligand-binding site (site 1) and this induces integrin conformational changes and enhanced ligand binding to site 1. ITGAV:ITGB3 and ITGAV:ITGB6 act as a receptor for fibrillin-1 (FBN1) and mediate R-G-D-dependent cell adhesion to FBN1. Integrin alpha-V/beta-6 or alpha-V/beta-8 (ITGAV:ITGB6 or ITGAV:ITGB8) mediates R-G-D-dependent release of transforming growth factor beta-1 (TGF-beta-1) from regulatory Latency-associated peptide (LAP), thereby playing a key role in TGF-beta-1 activation. ITGAV:ITGB3 acts as a receptor for CD40LG. ITGAV:ITGB3 binds to the Lilrb4a/Gp49b receptor and enhances the Lilrb4a-mediated inhibition of mast cell activation. ITGAV:ITGB3 also suppresses marginal zone B cell antibody production through its interaction with Lilrb4a. ITGAV:ITGB3 acts as a receptor for IBSP and promotes cell adhesion and migration to IBSP. This is Integrin alpha-V (Itgav) from Mus musculus (Mouse).